The following is a 173-amino-acid chain: Bifunctional protein PyrR (173 aa).

The PRPP-binding motif lies at 93-105 (VILIDDVLYTGRT).

The protein belongs to the purine/pyrimidine phosphoribosyltransferase family. PyrR subfamily. Homodimer and homohexamer; in equilibrium.

It carries out the reaction UMP + diphosphate = 5-phospho-alpha-D-ribose 1-diphosphate + uracil. Functionally, regulates transcriptional attenuation of the pyrimidine nucleotide (pyr) operon by binding in a uridine-dependent manner to specific sites on pyr mRNA. This disrupts an antiterminator hairpin in the RNA and favors formation of a downstream transcription terminator, leading to a reduced expression of downstream genes. Also displays a weak uracil phosphoribosyltransferase activity which is not physiologically significant. This chain is Bifunctional protein PyrR, found in Streptococcus pyogenes serotype M12 (strain MGAS2096).